Reading from the N-terminus, the 190-residue chain is Putative cyclic ADP-D-ribose synthase ThsB (190 aa).

It belongs to the Thoeris B TIR-like family. In terms of assembly, homodimer.

It is found in the cytoplasm. With respect to regulation, activated upon phage infection. TIR-like domain-containing component of the Thoeris antiviral defense system, composed of ThsA and ThsB. Expression of ThsA and ThsB in B.subtilis (strain BEST7003) confers resistance to phages SBSphiC, SBSphiJ and SPO1. Phage infection activates this protein, generating a signal molecule that in turn activates ThsA. In terms of biological role, probably hydrolyzes NAD(+) to make a cyclic ADP-D-ribose (cADPR) signaling molecule; might make 3'cADPR. The protein is Putative cyclic ADP-D-ribose synthase ThsB of Bacillus amyloliquefaciens (strain Y2) (Bacillus amyloliquefaciens subsp. plantarum (strain B9601-Y2)).